Here is a 166-residue protein sequence, read N- to C-terminus: Transcriptional repressor NrdR (166 aa).

A zinc finger lies at Cys-3–Cys-34. Residues Leu-46 to Asp-136 form the ATP-cone domain.

Belongs to the NrdR family. Requires Zn(2+) as cofactor.

Functionally, negatively regulates transcription of bacterial ribonucleotide reductase nrd genes and operons by binding to NrdR-boxes. This chain is Transcriptional repressor NrdR, found in Paenarthrobacter aurescens (strain TC1).